Here is an 869-residue protein sequence, read N- to C-terminus: Bifunctional uridylyltransferase/uridylyl-removing enzyme (869 aa).

The segment at 1–331 (MPTNLPALPM…FPSESQVTRV (331 aa)) is uridylyltransferase. The tract at residues 332–688 (INERFVERQG…ARISPAGEGL (357 aa)) is uridylyl-removing. The HD domain occupies 450-572 (VDQHILMVVR…VGDERHLTAL (123 aa)). ACT domains lie at 689–773 (QVAV…PSQG) and 800–869 (LLSL…ALEI).

This sequence belongs to the GlnD family. Mg(2+) serves as cofactor.

It catalyses the reaction [protein-PII]-L-tyrosine + UTP = [protein-PII]-uridylyl-L-tyrosine + diphosphate. The enzyme catalyses [protein-PII]-uridylyl-L-tyrosine + H2O = [protein-PII]-L-tyrosine + UMP + H(+). Its activity is regulated as follows. Uridylyltransferase (UTase) activity is inhibited by glutamine, while glutamine activates uridylyl-removing (UR) activity. Modifies, by uridylylation and deuridylylation, the PII regulatory proteins (GlnB and homologs), in response to the nitrogen status of the cell that GlnD senses through the glutamine level. Under low glutamine levels, catalyzes the conversion of the PII proteins and UTP to PII-UMP and PPi, while under higher glutamine levels, GlnD hydrolyzes PII-UMP to PII and UMP (deuridylylation). Thus, controls uridylylation state and activity of the PII proteins, and plays an important role in the regulation of nitrogen assimilation and metabolism. This chain is Bifunctional uridylyltransferase/uridylyl-removing enzyme, found in Cupriavidus pinatubonensis (strain JMP 134 / LMG 1197) (Cupriavidus necator (strain JMP 134)).